Reading from the N-terminus, the 347-residue chain is Phenylalanine--tRNA ligase alpha subunit (347 aa).

E261 provides a ligand contact to Mg(2+).

This sequence belongs to the class-II aminoacyl-tRNA synthetase family. Phe-tRNA synthetase alpha subunit type 1 subfamily. Tetramer of two alpha and two beta subunits. It depends on Mg(2+) as a cofactor.

Its subcellular location is the cytoplasm. It carries out the reaction tRNA(Phe) + L-phenylalanine + ATP = L-phenylalanyl-tRNA(Phe) + AMP + diphosphate + H(+). The sequence is that of Phenylalanine--tRNA ligase alpha subunit from Streptococcus equi subsp. equi (strain 4047).